Consider the following 576-residue polypeptide: Lysine--tRNA ligase (576 aa).

Residues Glu413 and Glu420 each contribute to the Mg(2+) site.

Belongs to the class-II aminoacyl-tRNA synthetase family. As to quaternary structure, homodimer. Mg(2+) is required as a cofactor.

The protein resides in the cytoplasm. The enzyme catalyses tRNA(Lys) + L-lysine + ATP = L-lysyl-tRNA(Lys) + AMP + diphosphate. The sequence is that of Lysine--tRNA ligase from Bacteroides thetaiotaomicron (strain ATCC 29148 / DSM 2079 / JCM 5827 / CCUG 10774 / NCTC 10582 / VPI-5482 / E50).